A 154-amino-acid polypeptide reads, in one-letter code: Golgi-associated plant pathogenesis-related protein 1 (154 aa).

A disordered region spans residues 1–21; the sequence is MGKSASKQFHNEVLKAHNEYR. Gly2 carries N-myristoyl glycine lipidation. The segment covering 9–21 has biased composition (basic and acidic residues); sequence FHNEVLKAHNEYR. One can recognise an SCP domain in the interval 14 to 132; it reads LKAHNEYRQK…SDGSSFVVAR (119 aa). Residues 30–53 are a coiled coil; that stretch reads KLCKNLNREAQQYSEALASTRILK. The interval 91-98 is interaction with CAV1; sequence NFQQPGFT.

It belongs to the CRISP family. In terms of assembly, homodimer. Interacts with CAV1. As to expression, highest expression in lung and peripheral leukocytes, and minor expression in liver and kidney.

It is found in the golgi apparatus membrane. The sequence is that of Golgi-associated plant pathogenesis-related protein 1 (GLIPR2) from Homo sapiens (Human).